Consider the following 237-residue polypeptide: GATA zinc finger domain-containing protein 18 (237 aa).

Low complexity-rich tracts occupy residues 1–28 (MAHNNNNNINNNNNNNNNNNNNNNKNNN) and 87–118 (NTSTNTTTTTTTTTTTTTTSSPNNNVITPNSN). 3 disordered regions span residues 1-31 (MAHNNNNNINNNNNNNNNNNNNNNKNNNSEY), 78-119 (PTNT…NSNL), and 140-186 (FEEG…GGCS). Residues 140-151 (FEEGDDEEETSS) show a composition bias toward acidic residues. Over residues 152–167 (DSDSSSSSSTSSSSSE) the composition is skewed to low complexity. The GATA-type zinc-finger motif lies at 185–212 (CSICKTQETPYWRKGKDGDKTVYLCNAC).

This chain is GATA zinc finger domain-containing protein 18 (gtaR), found in Dictyostelium discoideum (Social amoeba).